The sequence spans 61 residues: Small ribosomal subunit protein uS14 (61 aa).

Residues Cys24, Cys27, Cys40, and Cys43 each contribute to the Zn(2+) site.

It belongs to the universal ribosomal protein uS14 family. Zinc-binding uS14 subfamily. As to quaternary structure, part of the 30S ribosomal subunit. Contacts proteins S3 and S10. Requires Zn(2+) as cofactor.

Its function is as follows. Binds 16S rRNA, required for the assembly of 30S particles and may also be responsible for determining the conformation of the 16S rRNA at the A site. In Beutenbergia cavernae (strain ATCC BAA-8 / DSM 12333 / CCUG 43141 / JCM 11478 / NBRC 16432 / NCIMB 13614 / HKI 0122), this protein is Small ribosomal subunit protein uS14.